The primary structure comprises 2148 residues: Polyketide synthase 1 (2148 aa).

An N-terminal acylcarrier protein transacylase domain (SAT) region spans residues 19–261 (FIFGDQSSCN…TPLAVHAPYH (243 aa)). One can recognise a Ketosynthase family 3 (KS3) domain in the interval 394–829 (ESKIAIIGMS…GGNTALLVED (436 aa)). Catalysis depends on for beta-ketoacyl synthase activity residues cysteine 566, histidine 701, and histidine 745. Positions 930-1236 (FVFSGQGSQY…MRNKDGWQVL (307 aa)) are malonyl-CoA:ACP transacylase (MAT) domain. Serine 1018 (for acyl/malonyl transferase activity) is an active-site residue. A product template (PT) domain region spans residues 1310 to 1624 (TASVHRMVHE…RKVLNTAMPP (315 aa)). The tract at residues 1314 to 1447 (HRMVHESVEK…SSLHFEQPKV (134 aa)) is N-terminal hotdog fold. Residues 1314–1619 (HRMVHESVEK…FQGIPRKVLN (306 aa)) form the PKS/mFAS DH domain. Residue histidine 1346 is the Proton acceptor; for dehydratase activity of the active site. The interval 1474–1619 (LNSRMSSGVI…FQGIPRKVLN (146 aa)) is C-terminal hotdog fold. Aspartate 1533 functions as the Proton donor; for dehydratase activity in the catalytic mechanism. The segment at 1619–1655 (NTAMPPPKSQNEAPVRSGPAKPAAKPPRSASSEHSGH) is disordered. Residues 1634-1650 (RSGPAKPAAKPPRSASS) show a composition bias toward low complexity. One can recognise a Carrier 1 domain in the interval 1678 to 1752 (RNPMLPVFKI…DLAAQLGLDT (75 aa)). O-(pantetheine 4'-phosphoryl)serine is present on serine 1712. The segment covering 1755-1790 (SDQSSGQSSSSGGLSPRSDSIGEITSSVTTPPSLSP) has biased composition (low complexity). The disordered stretch occupies residues 1755–1796 (SDQSSGQSSSSGGLSPRSDSIGEITSSVTTPPSLSPRGSVSG). The Carrier 2 domain occupies 1793-1870 (SVSGSQCKDV…SFKHMFQQGH (78 aa)). O-(pantetheine 4'-phosphoryl)serine is present on serine 1830. The tract at residues 1882 to 2146 (LKQYRATSTL…ERVAAFIRST (265 aa)) is thioesterase (TE) domain. Residue serine 1973 is the For thioesterase activity of the active site.

It participates in pigment biosynthesis. Functionally, polyketide synthase; part of the Pks1 gene cluster that mediates the biosynthesis of an anthraquinone derivative pigment that contributes to conidial pigmentation that provides protection from UV radiation, heat and cold stress. The polyketide synthase Pks1 produces 1-acetyl-2,4,6,8-tetrahydroxy-9,10-anthraquinone though condensation of acetyl-CoA with malonyl-CoA. The dehydratase EthD and the laccase Mlac1 further convert the anthraquinone derivative into the final conidial pigment. The polypeptide is Polyketide synthase 1 (Metarhizium robertsii (strain ARSEF 23 / ATCC MYA-3075) (Metarhizium anisopliae (strain ARSEF 23))).